A 387-amino-acid chain; its full sequence is Protein TsgA homolog (387 aa).

12 helical membrane passes run W11 to M31, N47 to I67, L76 to I96, I101 to I121, L134 to Y154, I160 to T180, I205 to W225, V243 to I263, M271 to S291, I299 to L319, L331 to V351, and T358 to F378.

It belongs to the major facilitator superfamily. TsgA family.

It localises to the cell membrane. The sequence is that of Protein TsgA homolog from Buchnera aphidicola subsp. Schizaphis graminum (strain Sg).